The following is a 90-amino-acid chain: Probable Fe(2+)-trafficking protein (90 aa).

Belongs to the Fe(2+)-trafficking protein family.

Could be a mediator in iron transactions between iron acquisition and iron-requiring processes, such as synthesis and/or repair of Fe-S clusters in biosynthetic enzymes. The polypeptide is Probable Fe(2+)-trafficking protein (Azoarcus sp. (strain BH72)).